The chain runs to 214 residues: Probable transaldolase (214 aa).

Residue lysine 83 is the Schiff-base intermediate with substrate of the active site.

It belongs to the transaldolase family. Type 3B subfamily.

It is found in the cytoplasm. It carries out the reaction D-sedoheptulose 7-phosphate + D-glyceraldehyde 3-phosphate = D-erythrose 4-phosphate + beta-D-fructose 6-phosphate. Its pathway is carbohydrate degradation; pentose phosphate pathway; D-glyceraldehyde 3-phosphate and beta-D-fructose 6-phosphate from D-ribose 5-phosphate and D-xylulose 5-phosphate (non-oxidative stage): step 2/3. In terms of biological role, transaldolase is important for the balance of metabolites in the pentose-phosphate pathway. The polypeptide is Probable transaldolase (Maridesulfovibrio salexigens (strain ATCC 14822 / DSM 2638 / NCIMB 8403 / VKM B-1763) (Desulfovibrio salexigens)).